We begin with the raw amino-acid sequence, 255 residues long: NAD(P)H-quinone oxidoreductase subunit K, chloroplastic (255 aa).

Positions 47, 48, 112, and 143 each coordinate [4Fe-4S] cluster.

The protein belongs to the complex I 20 kDa subunit family. As to quaternary structure, NDH is composed of at least 16 different subunits, 5 of which are encoded in the nucleus. The cofactor is [4Fe-4S] cluster.

Its subcellular location is the plastid. It is found in the chloroplast thylakoid membrane. The catalysed reaction is a plastoquinone + NADH + (n+1) H(+)(in) = a plastoquinol + NAD(+) + n H(+)(out). It carries out the reaction a plastoquinone + NADPH + (n+1) H(+)(in) = a plastoquinol + NADP(+) + n H(+)(out). NDH shuttles electrons from NAD(P)H:plastoquinone, via FMN and iron-sulfur (Fe-S) centers, to quinones in the photosynthetic chain and possibly in a chloroplast respiratory chain. The immediate electron acceptor for the enzyme in this species is believed to be plastoquinone. Couples the redox reaction to proton translocation, and thus conserves the redox energy in a proton gradient. The polypeptide is NAD(P)H-quinone oxidoreductase subunit K, chloroplastic (Zygnema circumcarinatum (Green alga)).